A 357-amino-acid chain; its full sequence is Large ribosomal subunit protein uL10 (357 aa).

The segment at Met-311–Gly-357 is disordered. Residues Glu-325–Ala-348 are compositionally biased toward acidic residues.

It belongs to the universal ribosomal protein uL10 family. Part of the 50S ribosomal subunit. Forms part of the ribosomal stalk which helps the ribosome interact with GTP-bound translation factors. Forms a heptameric L10(L12)2(L12)2(L12)2 complex, where L10 forms an elongated spine to which the L12 dimers bind in a sequential fashion.

Its function is as follows. Forms part of the ribosomal stalk, playing a central role in the interaction of the ribosome with GTP-bound translation factors. The protein is Large ribosomal subunit protein uL10 of Methanopyrus kandleri (strain AV19 / DSM 6324 / JCM 9639 / NBRC 100938).